Consider the following 428-residue polypeptide: Serine--tRNA ligase (428 aa).

An L-serine-binding site is contributed by Thr235 to Glu237. Arg266–Glu268 lines the ATP pocket. Glu289 contacts L-serine. Glu353 to Ser356 lines the ATP pocket. Ser389 is a binding site for L-serine.

This sequence belongs to the class-II aminoacyl-tRNA synthetase family. Type-1 seryl-tRNA synthetase subfamily. Homodimer. The tRNA molecule binds across the dimer.

Its subcellular location is the cytoplasm. It catalyses the reaction tRNA(Ser) + L-serine + ATP = L-seryl-tRNA(Ser) + AMP + diphosphate + H(+). The catalysed reaction is tRNA(Sec) + L-serine + ATP = L-seryl-tRNA(Sec) + AMP + diphosphate + H(+). The protein operates within aminoacyl-tRNA biosynthesis; selenocysteinyl-tRNA(Sec) biosynthesis; L-seryl-tRNA(Sec) from L-serine and tRNA(Sec): step 1/1. In terms of biological role, catalyzes the attachment of serine to tRNA(Ser). Is also able to aminoacylate tRNA(Sec) with serine, to form the misacylated tRNA L-seryl-tRNA(Sec), which will be further converted into selenocysteinyl-tRNA(Sec). The sequence is that of Serine--tRNA ligase from Shewanella amazonensis (strain ATCC BAA-1098 / SB2B).